Consider the following 207-residue polypeptide: UPF0319 protein VV2327 (207 aa).

Positions 1 to 18 are cleaved as a signal peptide; that stretch reads MLRVLGLAGMLMSFNIHA.

Belongs to the UPF0319 family.

The protein is UPF0319 protein VV2327 of Vibrio vulnificus (strain YJ016).